Consider the following 269-residue polypeptide: Membrane protein insertase YidC 1 (269 aa).

The N-terminal stretch at 1–20 is a signal peptide; that stretch reads MKKKFSLIAMAGAALLLLTA. C21 carries N-palmitoyl cysteine lipidation. C21 carries S-diacylglycerol cysteine lipidation. Transmembrane regions (helical) follow at residues 45-65, 124-144, 165-185, and 203-223; these read IRFL…TIVI, YMGC…YQAL, PTFI…YLMM, and PIFI…YWVI.

It belongs to the OXA1/ALB3/YidC family. Type 2 subfamily.

Its subcellular location is the cell membrane. Required for the insertion and/or proper folding and/or complex formation of integral membrane proteins into the membrane. Involved in integration of membrane proteins that insert both dependently and independently of the Sec translocase complex, as well as at least some lipoproteins. The chain is Membrane protein insertase YidC 1 from Lactococcus lactis subsp. lactis (strain IL1403) (Streptococcus lactis).